The primary structure comprises 467 residues: Glutamate--tRNA ligase (467 aa).

A 'HIGH' region motif is present at residues 13 to 23 (PSPTGYLHVGG). The short motif at 245 to 249 (KLSKR) is the 'KMSKS' region element. Lys-248 contributes to the ATP binding site.

This sequence belongs to the class-I aminoacyl-tRNA synthetase family. Glutamate--tRNA ligase type 1 subfamily. As to quaternary structure, monomer.

It localises to the cytoplasm. It catalyses the reaction tRNA(Glu) + L-glutamate + ATP = L-glutamyl-tRNA(Glu) + AMP + diphosphate. Its function is as follows. Catalyzes the attachment of glutamate to tRNA(Glu) in a two-step reaction: glutamate is first activated by ATP to form Glu-AMP and then transferred to the acceptor end of tRNA(Glu). The protein is Glutamate--tRNA ligase of Herminiimonas arsenicoxydans.